The primary structure comprises 72 residues: Translational regulator CsrA (72 aa).

This sequence belongs to the CsrA/RsmA family. As to quaternary structure, homodimer; the beta-strands of each monomer intercalate to form a hydrophobic core, while the alpha-helices form wings that extend away from the core.

It localises to the cytoplasm. Its function is as follows. A translational regulator that binds mRNA to regulate translation initiation and/or mRNA stability. Usually binds in the 5'-UTR at or near the Shine-Dalgarno sequence preventing ribosome-binding, thus repressing translation. Its main target seems to be the major flagellin gene, while its function is anatagonized by FliW. The chain is Translational regulator CsrA from Ruminiclostridium cellulolyticum (strain ATCC 35319 / DSM 5812 / JCM 6584 / H10) (Clostridium cellulolyticum).